A 209-amino-acid chain; its full sequence is Octanoyltransferase (209 aa).

The BPL/LPL catalytic domain maps to 30-209 (VNEPEIVYLV…IQTEFNKIFT (180 aa)). Substrate contacts are provided by residues 69–76 (RGGKFTFH), 143–145 (AIG), and 156–158 (GVA). C174 acts as the Acyl-thioester intermediate in catalysis.

This sequence belongs to the LipB family.

It localises to the cytoplasm. It catalyses the reaction octanoyl-[ACP] + L-lysyl-[protein] = N(6)-octanoyl-L-lysyl-[protein] + holo-[ACP] + H(+). Its pathway is protein modification; protein lipoylation via endogenous pathway; protein N(6)-(lipoyl)lysine from octanoyl-[acyl-carrier-protein]: step 1/2. Functionally, catalyzes the transfer of endogenously produced octanoic acid from octanoyl-acyl-carrier-protein onto the lipoyl domains of lipoate-dependent enzymes. Lipoyl-ACP can also act as a substrate although octanoyl-ACP is likely to be the physiological substrate. This is Octanoyltransferase from Rickettsia canadensis (strain McKiel).